We begin with the raw amino-acid sequence, 142 residues long: Hemoglobin subunit alpha-A (142 aa).

The Globin domain maps to 2–142 (VLSAADKTNV…VATVLTAKYR (141 aa)). His-59 serves as a coordination point for O2. Heme b is bound at residue His-88.

It belongs to the globin family. In terms of assembly, heterotetramer of two alpha chains and two beta chains. As to expression, red blood cells.

In terms of biological role, involved in oxygen transport from the lung to the various peripheral tissues. This Apus apus (Common swift) protein is Hemoglobin subunit alpha-A (HBAA).